The primary structure comprises 310 residues: Vomeronasal type-1 receptor 97 (310 aa).

The Extracellular segment spans residues 1 to 19 (MNKDNILHTDTNIKITLFS). The helical transmembrane segment at 20–40 (EVSIGISANSALFFSHLFMLF) threads the bilayer. The Cytoplasmic segment spans residues 41–49 (EKNRSKPID). A helical membrane pass occupies residues 50–70 (LYIAFLSLTQLMLLITIGLIA). At 71-93 (ADMFMSRGRWDSTTCQSLIYLHR) the chain is on the extracellular side. A disulfide bridge links C85 with C172. Residues 94-114 (LLRGFTLCATCLLNVLWTITL) form a helical membrane-spanning segment. The Cytoplasmic segment spans residues 115 to 131 (SPRSSCLTTFKHKSPHH). Residues 132–152 (ISGAFLFFCVLYISFGSHLFL) form a helical membrane-spanning segment. Topologically, residues 153–190 (STIATPNLTSDNFMYVTQSCSFLPMSYSRTSMFSTPMA) are extracellular. N159 carries an N-linked (GlcNAc...) asparagine glycan. Residues 191-211 (IREALLIGLIGLSSGYMVAFL) form a helical membrane-spanning segment. The Cytoplasmic segment spans residues 212–238 (WRHKNQARHLHSTSLSSKVSPEQRATR). Residues 239-259 (TIMILMSFFVVLYILENVVFY) traverse the membrane as a helical segment. The Extracellular portion of the chain corresponds to 260-269 (SRMTFKDGSM). Residues 270–290 (FYCVQIIVSHSYATISPFVFI) traverse the membrane as a helical segment. Over 291-310 (CTEKRIIKLWGSMSSRIVSI) the chain is Cytoplasmic.

This sequence belongs to the G-protein coupled receptor 1 family. As to expression, expressed in 1-4% of neurons of the vomeronasal organ. Only one pheromone receptor gene may be expressed in a particular neuron. Not expressed in the main olfactory epithelium.

The protein localises to the cell membrane. In terms of biological role, putative pheromone receptor implicated in the regulation of social as well as reproductive behavior. The sequence is that of Vomeronasal type-1 receptor 97 (Vom1r97) from Rattus norvegicus (Rat).